The following is a 420-amino-acid chain: FAD-dependent monooxygenase ntnJ (420 aa).

Residues 12-31 traverse the membrane as a helical segment; the sequence is FRVIVVGAGIGGLSAAVALA. FAD-binding residues include Glu41 and Ala54. Residue Asn124 is glycosylated (N-linked (GlcNAc...) asparagine). The active site involves Arg187. An N-linked (GlcNAc...) asparagine glycan is attached at Asn264. FAD contacts are provided by Asp302 and Val315.

This sequence belongs to the paxM FAD-dependent monooxygenase family. Requires FAD as cofactor.

It is found in the membrane. It participates in secondary metabolite biosynthesis; terpenoid biosynthesis. Its function is as follows. FAD-dependent monooxygenase; part of the gene cluster that mediates the biosynthesis of the meroterpenoids nectripenoids A and B, as well as cochliquninone D and isocochliquninone E. The pathway probably begins with the HR-PKS ntnH that catalyzes two chain-extension steps to form a reduced triketide, which then primes the SAT domain in the NR-PKS ntnG to initiate three more cycles of extension to give a linear hexaketide corresponding to the polyketide part of nectripenoids. The FAD-dependent monooxygenase ntnJ then performs an oxidative decarboxylation at C11 of the ntnH/ntnG product, via an electrophilic aromatic hydroxylation with concomitant ipso-decarboxylation. The membrane-bound polyprenyl transferase ntnF then introduces a farnesyl group before the FAD-dependent monooxygenase ntnK functions as the first epoxidase on terminal C12'-C13' olefin, followed by a second epoxidation on C7'-C8' catalyzed by ntnA. The terpene cyclase/mutase ntnI then initiates the sequential tricyclic ring formation through protonation of the terminal epoxide and catalyzes the regioselective and stereoselective 6/6/6-tricyclic ring formation. The cytochrome P450 monooxygenase ntnM may then hydroxylate C1'. The chain is FAD-dependent monooxygenase ntnJ from Nectria sp.